Here is a 371-residue protein sequence, read N- to C-terminus: MKNNYTSLKSPLDEEDELKTDHEIDLEKGLLPEYNSEEEGTLPLYSDISKLANPVPEDSSTGPTEIANPNVERRQEFKDSHPNIYFLLRLLISVLAVSVVFFTAWVCVNPLEKSIFGKVAFSVTIGITCPILFIATFCFFETWTQAVAQCIKVTVIFLAQCVKVTVIFLAQCVKVTAVFLAKCVKVIAVGLYNSKKDLVVTIWLAWVVICFILFGCVKDGRLNLNKALICSTCSISAALFFILLLVCIPIWTLKHMLFGLFQVLGVQSCVVIVTKGLMYLFDKHIDATGYEIEASSLFVIGNFLFFYEMERPGALKRMPKFIGNGIASFLGGLGNAFGGIGNAIGRIGNAFRGANDNNDIPLGEMDVESEV.

Transmembrane regions (helical) follow at residues 86-106 (FLLR…TAWV), 120-140 (AFSV…FCFF), 153-173 (VTVI…AQCV), 197-217 (DLVV…FGCV), 233-253 (CSIS…IWTL), 257-277 (LFGL…TKGL), 287-307 (ATGY…LFFY), and 321-341 (FIGN…GGIG).

It belongs to the WTF family. Homomer. Interacts with other proteins that exhibit high sequence similarity.

The protein localises to the spore membrane. It is found in the vacuole membrane. In terms of biological role, acts as a suppressor component of the dual wtf meiotic drive system, and can suppress but not confer meiotic drive by compatible poisons. Wtf meiotic drive systems promote unequal transmission of alleles from the parental zygote to progeny spores by encoding a poison and an antidote from the same locus; the poison is trans-acting and forms toxic aggregates in all spores within an ascus, wherease the antidote is spore-specific and targets aggregates for degradation by the vacuole. Meiotic drive by wtf systems therefore lead to poisoning of all progeny that do not inherit the dual poison/antidote allele, or express a compatible antidote. This chain is Meiotic drive suppressor wtf18, found in Schizosaccharomyces kambucha (Fission yeast).